The following is a 71-amino-acid chain: Large ribosomal subunit protein bL31 (71 aa).

Cys16, Cys18, Cys37, and Cys40 together coordinate Zn(2+).

The protein belongs to the bacterial ribosomal protein bL31 family. Type A subfamily. Part of the 50S ribosomal subunit. Requires Zn(2+) as cofactor.

Functionally, binds the 23S rRNA. The polypeptide is Large ribosomal subunit protein bL31 (Sodalis glossinidius (strain morsitans)).